The sequence spans 312 residues: Very-long-chain 3-oxoacyl-CoA reductase (312 aa).

The chain crosses the membrane as a helical span at residues 4–24 (ALPAAGFLYWVGAGTVAYLAL). Position 50 to 79 (50 to 79 (GEWAVVTGSTDGIGKSYAEELAKHGMKVVL)) interacts with NADP(+). 2 helical membrane passes run 182–202 (GAIL…LTIY) and 271–291 (GYLI…WIYL). S189 is a substrate binding site. Y202 acts as the Proton acceptor in catalysis. Positions 308–312 (KTKKN) match the Di-lysine motif motif.

This sequence belongs to the short-chain dehydrogenases/reductases (SDR) family. 17-beta-HSD 3 subfamily. Interacts with ELOVL1 and LASS2. As to expression, expressed in most tissues tested. Highly expressed in the ovary and mammary. Expressed in platelets.

Its subcellular location is the endoplasmic reticulum membrane. It carries out the reaction a very-long-chain (3R)-3-hydroxyacyl-CoA + NADP(+) = a very-long-chain 3-oxoacyl-CoA + NADPH + H(+). The catalysed reaction is 17beta-estradiol + NAD(+) = estrone + NADH + H(+). The enzyme catalyses 17beta-estradiol + NADP(+) = estrone + NADPH + H(+). It catalyses the reaction 3-oxooctadecanoyl-CoA + NADPH + H(+) = (3R)-hydroxyoctadecanoyl-CoA + NADP(+). It carries out the reaction (7Z,10Z,13Z,16Z)-3-oxodocosatetraenoyl-CoA + NADPH + H(+) = (3R)-hydroxy-(7Z,10Z,13Z,16Z)-docosatetraenoyl-CoA + NADP(+). The catalysed reaction is 3-oxo-(7Z,10Z,13Z,16Z,19Z)-docosapentaenoyl-CoA + NADPH + H(+) = (3R)-hydroxy-(7Z,10Z,13Z,16Z,19Z)-docosapentaenoyl-CoA + NADP(+). The enzyme catalyses (8Z,11Z,14Z)-3-oxoeicosatrienoyl-CoA + NADPH + H(+) = (3R)-hydroxy-(8Z,11Z,14Z)-eicosatrienoyl-CoA + NADP(+). It participates in lipid metabolism; fatty acid biosynthesis. It functions in the pathway steroid biosynthesis; estrogen biosynthesis. Its function is as follows. Catalyzes the second of the four reactions of the long-chain fatty acids elongation cycle. This endoplasmic reticulum-bound enzymatic process, allows the addition of two carbons to the chain of long- and very long-chain fatty acids/VLCFAs per cycle. This enzyme has a 3-ketoacyl-CoA reductase activity, reducing 3-ketoacyl-CoA to 3-hydroxyacyl-CoA, within each cycle of fatty acid elongation. Thereby, it may participate in the production of VLCFAs of different chain lengths that are involved in multiple biological processes as precursors of membrane lipids and lipid mediators. May also catalyze the transformation of estrone (E1) into estradiol (E2) and play a role in estrogen formation. The polypeptide is Very-long-chain 3-oxoacyl-CoA reductase (Homo sapiens (Human)).